Consider the following 311-residue polypeptide: p-hydroxybenzoic acid efflux pump subunit AaeA (311 aa).

The chain crosses the membrane as a helical span at residues 11–31 (IAITLILVLLGIIAIFKAWVF).

It belongs to the membrane fusion protein (MFP) (TC 8.A.1) family.

It is found in the cell inner membrane. Forms an efflux pump with AaeB. The protein is p-hydroxybenzoic acid efflux pump subunit AaeA of Serratia proteamaculans (strain 568).